The following is a 435-amino-acid chain: Monodehydroascorbate reductase 4, cytosolic (435 aa).

FAD-binding positions include 14–17 (GGVA), E41, R48, K53, I96, and 147–148 (RD). Residues 172 to 178 (GGYIGLE), E196, R202, and G261 each bind NAD(+). 174-178 (YIGLE) is an NADP(+) binding site. The NADP(+) site is built by R202 and G261. D298 contributes to the FAD binding site. 314 to 315 (EH) provides a ligand contact to NAD(+). 314 to 315 (EH) contributes to the NADP(+) binding site. V316 serves as a coordination point for FAD. R320 provides a ligand contact to L-ascorbate. Position 349 (Y349) interacts with FAD. Y349 is an NAD(+) binding site. Position 349 (Y349) interacts with NADP(+). An L-ascorbate-binding site is contributed by R351.

Belongs to the FAD-dependent oxidoreductase family. FAD serves as cofactor. As to expression, expressed in anthers.

The protein resides in the cytoplasm. The enzyme catalyses 2 monodehydro-L-ascorbate radical + NADH + H(+) = 2 L-ascorbate + NAD(+). Functionally, catalyzes the conversion of monodehydroascorbate to ascorbate, oxidizing NADH in the process. Ascorbate is a major antioxidant against reactive oxygen species (ROS) and nitric oxide (NO). The chain is Monodehydroascorbate reductase 4, cytosolic from Oryza sativa subsp. japonica (Rice).